A 293-amino-acid chain; its full sequence is Serine/threonine-protein phosphatase 2A catalytic subunit beta isoform (293 aa).

Aspartate 41, histidine 43, aspartate 69, and asparagine 101 together coordinate Mn(2+). Histidine 102 serves as the catalytic Proton donor. Mn(2+) is bound by residues histidine 151 and histidine 225. Tyrosine 291 is subject to Phosphotyrosine. The residue at position 293 (leucine 293) is a Leucine methyl ester.

This sequence belongs to the PPP phosphatase family. PP-1 subfamily. As to quaternary structure, found in a complex with at least ARL2, PPP2CB, PPP2R1A, PPP2R2A, PPP2R5E and TBCD. Interacts with TBCD. PP2A consists of a common heterodimeric core enzyme (composed of a 36 kDa catalytic subunit (subunit C) and a 65 kDa constant regulatory subunit (PR65) (subunit A)) that associates with a variety of regulatory subunits. Proteins that associate with the core dimer include three families of regulatory subunits B (the R2/B/PR55/B55, R3/B''/PR72/PR130/PR59 and R5/B'/B56 families), the 48 kDa variable regulatory subunit, viral proteins, and cell signaling molecules. Binds PPME1. May indirectly interact with SGO1, most probably through regulatory B56 subunits. Interacts with CTTNBP2NL. Interacts with PTPA. Part of the core of STRIPAK complexes composed of PP2A catalytic and scaffolding subunits, the striatins (PP2A regulatory subunits), the striatin-associated proteins MOB4, STRIP1 and STRIP2, PDCD10 and members of the STE20 kinases, such as STK24 and STK26. Mn(2+) serves as cofactor. Post-translationally, reversibly methyl esterified on Leu-293 by leucine carboxyl methyltransferase 1 (Lcmt1) and protein phosphatase methylesterase 1 (PPME1). Carboxyl methylation influences the affinity of the catalytic subunit for the different regulatory subunits, thereby modulating the PP2A holoenzyme's substrate specificity, enzyme activity and cellular localization. In terms of processing, phosphorylation of either threonine (by autophosphorylation-activated protein kinase) or tyrosine results in inactivation of the phosphatase. Auto-dephosphorylation has been suggested as a mechanism for reactivation. May be monoubiquitinated by NOSIP.

It localises to the cytoplasm. It is found in the nucleus. The protein resides in the chromosome. The protein localises to the centromere. Its subcellular location is the cytoskeleton. It localises to the spindle pole. The enzyme catalyses O-phospho-L-seryl-[protein] + H2O = L-seryl-[protein] + phosphate. It catalyses the reaction O-phospho-L-threonyl-[protein] + H2O = L-threonyl-[protein] + phosphate. Functionally, catalytic subunit of protein phosphatase 2A (PP2A), a serine/threonine phosphatase involved in the regulation of a wide variety of enzymes, signal transduction pathways, and cellular events. PP2A can modulate the activity of phosphorylase B kinase, casein kinase 2, mitogen-stimulated S6 kinase, and MAP-2 kinase. Part of the striatin-interacting phosphatase and kinase (STRIPAK) complexes. STRIPAK complexes have critical roles in protein (de)phosphorylation and are regulators of multiple signaling pathways including Hippo, MAPK, nuclear receptor and cytoskeleton remodeling. Different types of STRIPAK complexes are involved in a variety of biological processes such as cell growth, differentiation, apoptosis, metabolism and immune regulation. This is Serine/threonine-protein phosphatase 2A catalytic subunit beta isoform (PPP2CB) from Sus scrofa (Pig).